Here is a 90-residue protein sequence, read N- to C-terminus: Small ribosomal subunit protein uS15 (90 aa).

This sequence belongs to the universal ribosomal protein uS15 family. Part of the 30S ribosomal subunit. Forms a bridge to the 50S subunit in the 70S ribosome, contacting the 23S rRNA.

Functionally, one of the primary rRNA binding proteins, it binds directly to 16S rRNA where it helps nucleate assembly of the platform of the 30S subunit by binding and bridging several RNA helices of the 16S rRNA. Forms an intersubunit bridge (bridge B4) with the 23S rRNA of the 50S subunit in the ribosome. The sequence is that of Small ribosomal subunit protein uS15 from Helicobacter pylori (strain Shi470).